The following is a 238-amino-acid chain: tRNA1(Val) (adenine(37)-N6)-methyltransferase (238 aa).

The protein belongs to the methyltransferase superfamily. tRNA (adenine-N(6)-)-methyltransferase family.

It is found in the cytoplasm. It carries out the reaction adenosine(37) in tRNA1(Val) + S-adenosyl-L-methionine = N(6)-methyladenosine(37) in tRNA1(Val) + S-adenosyl-L-homocysteine + H(+). Functionally, specifically methylates the adenine in position 37 of tRNA(1)(Val) (anticodon cmo5UAC). The polypeptide is tRNA1(Val) (adenine(37)-N6)-methyltransferase (Shewanella baltica (strain OS223)).